Consider the following 479-residue polypeptide: Endoglucanase 20 (479 aa).

A signal peptide spans 1 to 21; the sequence is MGKLLVLMLVGMFLAFESLEA. A glycan (N-linked (GlcNAc...) asparagine) is linked at asparagine 29. Aspartate 76 functions as the Nucleophile in the catalytic mechanism. Histidine 398 is an active-site residue. N-linked (GlcNAc...) asparagine glycosylation occurs at asparagine 442. Catalysis depends on residues aspartate 449 and glutamate 458.

It belongs to the glycosyl hydrolase 9 (cellulase E) family.

The protein resides in the secreted. It catalyses the reaction Endohydrolysis of (1-&gt;4)-beta-D-glucosidic linkages in cellulose, lichenin and cereal beta-D-glucans.. The protein is Endoglucanase 20 of Arabidopsis thaliana (Mouse-ear cress).